Consider the following 246-residue polypeptide: Acetoacetate decarboxylase (246 aa).

Lysine 116 (schiff-base intermediate with acetoacetate) is an active-site residue.

This sequence belongs to the ADC family.

The catalysed reaction is acetoacetate + H(+) = acetone + CO2. In terms of biological role, catalyzes the conversion of acetoacetate to acetone and carbon dioxide. In Burkholderia multivorans (strain ATCC 17616 / 249), this protein is Acetoacetate decarboxylase.